We begin with the raw amino-acid sequence, 83 residues long: Sec-independent protein translocase protein TatA (83 aa).

The chain crosses the membrane as a helical span at residues 2 to 22 (GLGGISIWQLLIVLVIVLLLF). Basic and acidic residues-rich tracts occupy residues 50–65 (AAKQ…KVAA) and 74–83 (AEQKEKTEAK). Residues 50–83 (AAKQEAEEAEQKKVAAEEAAAAKTAEQKEKTEAK) are disordered.

It belongs to the TatA/E family. As to quaternary structure, the Tat system comprises two distinct complexes: a TatABC complex, containing multiple copies of TatA, TatB and TatC subunits, and a separate TatA complex, containing only TatA subunits. Substrates initially bind to the TatABC complex, which probably triggers association of the separate TatA complex to form the active translocon.

It is found in the cell inner membrane. Part of the twin-arginine translocation (Tat) system that transports large folded proteins containing a characteristic twin-arginine motif in their signal peptide across membranes. TatA could form the protein-conducting channel of the Tat system. This Saccharophagus degradans (strain 2-40 / ATCC 43961 / DSM 17024) protein is Sec-independent protein translocase protein TatA.